A 107-amino-acid chain; its full sequence is Flagellar transcriptional regulator FlhD (107 aa).

Belongs to the FlhD family. As to quaternary structure, homodimer; disulfide-linked. Forms a heterohexamer composed of two FlhC and four FlhD subunits. Each FlhC binds a FlhD dimer, forming a heterotrimer, and a hexamer assembles by dimerization of two heterotrimers.

The protein resides in the cytoplasm. In terms of biological role, functions in complex with FlhC as a master transcriptional regulator that regulates transcription of several flagellar and non-flagellar operons by binding to their promoter region. Activates expression of class 2 flagellar genes, including fliA, which is a flagellum-specific sigma factor that turns on the class 3 genes. Also regulates genes whose products function in a variety of physiological pathways. This is Flagellar transcriptional regulator FlhD from Bordetella avium (strain 197N).